The sequence spans 43 residues: Metallothionein B (43 aa).

A beta region spans residues 1 to 16; the sequence is SCAGSCKCKNCRCRSC. A divalent metal cation contacts are provided by cysteine 2, cysteine 6, cysteine 8, cysteine 11, cysteine 13, cysteine 16, cysteine 20, cysteine 21, cysteine 23, cysteine 24, cysteine 28, cysteine 31, cysteine 35, and cysteine 37. Residues 17–43 are alpha; the sequence is RKSCCSCCPAGCNNCVKGCVCKEPASS.

The protein belongs to the metallothionein superfamily. Type 1 family.

Functionally, metallothioneins have a high content of cysteine residues that bind various heavy metals. The chain is Metallothionein B from Colinus virginianus (Northern bobwhite).